A 126-amino-acid chain; its full sequence is Fatty acid-binding protein 2, liver (126 aa).

Cholate-binding positions include T54–N56, H99–Q101, and R121.

It belongs to the calycin superfamily. Fatty-acid binding protein (FABP) family.

The protein localises to the cytoplasm. Its function is as follows. Binds free fatty acids and their coenzyme A derivatives, bilirubin, and some other small molecules in the cytoplasm. May be involved in intracellular lipid transport. The specificity of axolotl L-FABP differs from that of LB-FABP. Binds 2 ligands per protein molecule. This Ambystoma mexicanum (Axolotl) protein is Fatty acid-binding protein 2, liver.